The sequence spans 340 residues: Probable HTH-type transcriptional regulator EndR (340 aa).

The HTH lacI-type domain occupies 1-58; that stretch reads MVTTMKEVAERAGVSKSTVSQFLQKRYNYMSENTKKKIEQAIEDLSYIPNEVARSLKQ. The segment at residues 5-24 is a DNA-binding region (H-T-H motif); sequence MKEVAERAGVSKSTVSQFLQ.

Putative repressor of the endoglucanase operon. This chain is Probable HTH-type transcriptional regulator EndR (endR), found in Paenibacillus polymyxa (Bacillus polymyxa).